A 362-amino-acid chain; its full sequence is E3 ubiquitin-protein ligase TM129 (362 aa).

The Lumenal segment spans residues Met1 to Val6. A helical membrane pass occupies residues Thr7–His27. Residues Ala28 to Thr56 lie on the Cytoplasmic side of the membrane. Residues Ala57–Ala77 traverse the membrane as a helical segment. The Lumenal portion of the chain corresponds to Ala78–Arg94. Residues Leu95–Ser115 traverse the membrane as a helical segment. Topologically, residues Arg116–Arg362 are cytoplasmic. Residues Cys285–Arg350 form an RING-type; degenerate zinc finger.

The protein belongs to the TMEM129 family. In terms of assembly, integral component of ER-resident dislocation complexes.

The protein resides in the endoplasmic reticulum membrane. The enzyme catalyses S-ubiquitinyl-[E2 ubiquitin-conjugating enzyme]-L-cysteine + [acceptor protein]-L-lysine = [E2 ubiquitin-conjugating enzyme]-L-cysteine + N(6)-ubiquitinyl-[acceptor protein]-L-lysine.. It functions in the pathway protein modification; protein ubiquitination. Its function is as follows. E3 ubiquitin-protein ligase involved in ER-associated protein degradation, preferentially associates with the E2 enzyme UBE2J2. Exploited by viral US11 proteins to mediate HLA class I proteins degradation. This is E3 ubiquitin-protein ligase TM129 (TMEM129) from Homo sapiens (Human).